A 211-amino-acid chain; its full sequence is Transcription factor bHLH150 (211 aa).

Residues Met1–Pro15 are compositionally biased toward polar residues. Positions Met1–Ile23 are disordered. The region spanning Ala135–Leu184 is the bHLH domain.

In terms of assembly, homodimer. Interacts with PRE3 and ASK7. Post-translationally, phosphorylated by ASK7.

The protein resides in the nucleus. Atypical bHLH transcription factor probably unable to bind DNA. Negatively regulates brassinosteroid signaling. The sequence is that of Transcription factor bHLH150 (BHLH150) from Arabidopsis thaliana (Mouse-ear cress).